A 103-amino-acid chain; its full sequence is Matrix Gla protein (103 aa).

Positions 1-19 (MKSLLPLAILAALAVAALC) are cleaved as a signal peptide. Glu21 is subject to 4-carboxyglutamate. 3 positions are modified to phosphoserine: Ser22, Ser25, and Ser28. The region spanning 51–97 (HAKAQERVRELNKPAQEINREACDDYKLCERYALIYGYNAAYNRYFR) is the Gla domain. 4 positions are modified to 4-carboxyglutamate: Glu56, Glu60, Glu67, and Glu71. The cysteines at positions 73 and 79 are disulfide-linked.

Belongs to the osteocalcin/matrix Gla protein family. Post-translationally, requires vitamin K-dependent gamma-carboxylation for its function.

The protein localises to the secreted. Associates with the organic matrix of bone and cartilage. Thought to act as an inhibitor of bone formation. This chain is Matrix Gla protein (Mgp), found in Rattus norvegicus (Rat).